We begin with the raw amino-acid sequence, 211 residues long: MSGTLVLVRHGQSDWNLKNLFTGWRDPDLTELGIEEAKAGGKALADYGIKFDIAFTSVLIRAQRTCQLVLDAVGQSSLETIRDQALNERDYGDLSGLNKDDARAKWGEEQVHIWRRSYDVPPPGGESLRDTGARVWPYYLTDILPRVLSGEKVLVAAHGNSLRSLVMVLDKLTKEQILKLNLATGVPMVYKLNADSTVASKEVLGDMSGAH.

Substrate contacts are provided by residues 9 to 16, 22 to 23, arginine 61, 88 to 91, lysine 99, 115 to 116, and 159 to 160; these read RHGQSDWN, TG, ERDY, RR, and GN. Catalysis depends on histidine 10, which acts as the Tele-phosphohistidine intermediate. Catalysis depends on glutamate 88, which acts as the Proton donor/acceptor.

It belongs to the phosphoglycerate mutase family. BPG-dependent PGAM subfamily. In terms of assembly, homodimer.

The enzyme catalyses (2R)-2-phosphoglycerate = (2R)-3-phosphoglycerate. Its pathway is carbohydrate degradation; glycolysis; pyruvate from D-glyceraldehyde 3-phosphate: step 3/5. Functionally, catalyzes the interconversion of 2-phosphoglycerate and 3-phosphoglycerate. This chain is 2,3-bisphosphoglycerate-dependent phosphoglycerate mutase, found in Rhizobium meliloti (strain 1021) (Ensifer meliloti).